The primary structure comprises 815 residues: SNF1 protein kinase subunit beta-1 (815 aa).

Over residues 1-11 (MGNSPSTQDPS) the composition is skewed to polar residues. Disordered stretches follow at residues 1-88 (MGNS…TIDK) and 120-146 (HDVG…TVKR). The N-myristoyl glycine moiety is linked to residue Gly-2. A compositionally biased stretch (basic and acidic residues) spans 12–31 (HSTKKEHGHHFHDAFNKDRQ). Over residues 32–42 (GSITSQLFNNR) the composition is skewed to polar residues. Ser-33 carries the post-translational modification Phosphoserine. Composition is skewed to basic and acidic residues over residues 72 to 88 (PSTD…TIDK) and 120 to 129 (HDVGAPEEQV). Phosphoserine occurs at positions 181, 198, 200, 206, 209, and 220. Disordered regions lie at residues 311–335 (HANN…NDDF), 363–389 (HHNK…FASL), and 410–444 (PLHP…SSIS). Residues 313–326 (NNNGNIENNTRNKG) are compositionally biased toward low complexity. Ser-331 carries the phosphoserine modification. Positions 363-376 (HHNKTKKAQSKKIR) are enriched in basic residues. 2 stretches are compositionally biased toward low complexity: residues 377–389 (SASN…FASL) and 433–444 (HSNSMSSMSSIS). The segment at 473–716 (VSTDIASALK…LQQGGNIDAE (244 aa)) is kinase-interacting sequence (KIS); required for interaction with SNF1. Phosphoserine is present on residues Ser-494 and Ser-497. The interval 581–616 (EPTLDEELPKRPELKRFPSSSRKSSYYSAKGVERPS) is disordered. Residues 587–596 (ELPKRPELKR) show a composition bias toward basic and acidic residues. A compositionally biased stretch (low complexity) spans 599–608 (SSSRKSSYYS). Ser-643 is subject to Phosphoserine. The segment at 724–804 (SRYPVPDLPI…FITQVVYAPC (81 aa)) is association with SNF1 kinase complex (ASC) domain; required for interaction with SNF4.

The protein belongs to the 5'-AMP-activated protein kinase beta subunit family. In terms of assembly, component of the SNF1 kinase complex, a heterotrimeric complex composed of the catalytic alpha subunit SNF1, one of the three related beta subunits SIP1, SIP2 or GAL83, and the regulatory gamma subunit SNF4. The beta subunit serves as a bridge between the catalytic and the regulatory subunit. Interacts (via KIS domain) with SNF1. Interacts (via ASC domain) with SNF4. In terms of processing, phosphorylated by SNF1 in vitro.

The protein resides in the cytoplasm. It localises to the vacuole membrane. Beta subunit of the SNF1 kinase complex, which is required for transcriptional, metabolic, and developmental adaptations in response to glucose limitation. Has a structural role, mediating heterotrimer formation, and a regulatory role, defining carbon source-regulated subcellular location and substrate specificity of the SNF1 kinase complex. Promotes the PKA-regulated relocalization of the SNF1 kinase complex to the vacuolar membrane in response to various types of carbon stress. The chain is SNF1 protein kinase subunit beta-1 (SIP1) from Saccharomyces cerevisiae (strain RM11-1a) (Baker's yeast).